A 369-amino-acid polypeptide reads, in one-letter code: Phenylalanine--tRNA ligase alpha subunit (369 aa).

Glutamate 270 contacts Mg(2+).

This sequence belongs to the class-II aminoacyl-tRNA synthetase family. Phe-tRNA synthetase alpha subunit type 1 subfamily. In terms of assembly, tetramer of two alpha and two beta subunits. It depends on Mg(2+) as a cofactor.

The protein localises to the cytoplasm. It carries out the reaction tRNA(Phe) + L-phenylalanine + ATP = L-phenylalanyl-tRNA(Phe) + AMP + diphosphate + H(+). The polypeptide is Phenylalanine--tRNA ligase alpha subunit (Phenylobacterium zucineum (strain HLK1)).